A 255-amino-acid polypeptide reads, in one-letter code: MPGPWLLLALALIFTLTGIPESCALPEAAQEEGAVTPDLPGLENVQVRPERRFLWKDLQRVRGDLGAALDSWITKRQHPGKREEEEKDIEAEERGDLGEGGAWRLHKRQHPGRRANQDKYSWADEEDSDWMPRSWLPDFFLDSWFSDVPQVKRQHPGRRSFPWMESDVTKRQHPGRRFIDPELQRSWEEKEGEGVLMPEKRQHPGKRALGHPCGPQGTCGQTGLLQLLGDLSRGQETLVKQSPQVEPWDKEPLEE.

Residues 1–24 (MPGPWLLLALALIFTLTGIPESCA) form the signal peptide. The disordered stretch occupies residues 76-102 (RQHPGKREEEEKDIEAEERGDLGEGGA). Pro79 and Pro111 each carry proline amide. Gln154 is modified (pyrrolidone carboxylic acid). Proline amide is present on Pro156. Gln172 is modified (pyrrolidone carboxylic acid). Residue Pro174 is modified to Proline amide. A compositionally biased stretch (basic and acidic residues) spans 184–202 (QRSWEEKEGEGVLMPEKRQ). 2 disordered regions span residues 184 to 214 (QRSW…HPCG) and 235 to 255 (QETL…PLEE). The residue at position 204 (Pro204) is a Proline amide. The span at 235–244 (QETLVKQSPQ) shows a compositional bias: polar residues.

It belongs to the TRH family.

It is found in the secreted. In terms of biological role, functions as a regulator of the biosynthesis of TSH in the anterior pituitary gland and as a neurotransmitter/ neuromodulator in the central and peripheral nervous systems. The polypeptide is Pro-thyrotropin-releasing hormone (Trh) (Rattus norvegicus (Rat)).